We begin with the raw amino-acid sequence, 299 residues long: Tyrosine recombinase XerC (299 aa).

The Core-binding (CB) domain maps to 1–85 (MERQLEAYCA…AVRGLYRYLN (85 aa)). A Tyr recombinase domain is found at 106–285 (RLPKVLDTDR…DFQHLAAVYD (180 aa)). Active-site residues include R146, K170, H237, R240, and H263. Y272 (O-(3'-phospho-DNA)-tyrosine intermediate) is an active-site residue.

This sequence belongs to the 'phage' integrase family. XerC subfamily. In terms of assembly, forms a cyclic heterotetrameric complex composed of two molecules of XerC and two molecules of XerD.

Its subcellular location is the cytoplasm. Its function is as follows. Site-specific tyrosine recombinase, which acts by catalyzing the cutting and rejoining of the recombining DNA molecules. The XerC-XerD complex is essential to convert dimers of the bacterial chromosome into monomers to permit their segregation at cell division. It also contributes to the segregational stability of plasmids. In Pseudomonas putida (strain W619), this protein is Tyrosine recombinase XerC.